We begin with the raw amino-acid sequence, 310 residues long: tRNA-cytidine(32) 2-sulfurtransferase (310 aa).

Residues 45-50 carry the PP-loop motif motif; that stretch reads SGGKDS. Positions 120, 123, and 211 each coordinate [4Fe-4S] cluster.

This sequence belongs to the TtcA family. In terms of assembly, homodimer. Requires Mg(2+) as cofactor. The cofactor is [4Fe-4S] cluster.

The protein localises to the cytoplasm. The catalysed reaction is cytidine(32) in tRNA + S-sulfanyl-L-cysteinyl-[cysteine desulfurase] + AH2 + ATP = 2-thiocytidine(32) in tRNA + L-cysteinyl-[cysteine desulfurase] + A + AMP + diphosphate + H(+). Its pathway is tRNA modification. Functionally, catalyzes the ATP-dependent 2-thiolation of cytidine in position 32 of tRNA, to form 2-thiocytidine (s(2)C32). The sulfur atoms are provided by the cysteine/cysteine desulfurase (IscS) system. This is tRNA-cytidine(32) 2-sulfurtransferase from Shewanella oneidensis (strain ATCC 700550 / JCM 31522 / CIP 106686 / LMG 19005 / NCIMB 14063 / MR-1).